The chain runs to 165 residues: Nucleotide-binding protein PMT9312_0481 (165 aa).

The protein belongs to the YajQ family.

Nucleotide-binding protein. This chain is Nucleotide-binding protein PMT9312_0481, found in Prochlorococcus marinus (strain MIT 9312).